Consider the following 418-residue polypeptide: 1-acylglycerol-3-phosphate O-acyltransferase (418 aa).

Residues 121 to 251 form the AB hydrolase-1 domain; sequence PTLVMVHGYG…RATWKGAVLN (131 aa). A GXSXG motif is present at residues 197–201; that stretch reads GHSFG. An HXXXXD motif motif is present at residues 379-384; the sequence is HFVFID.

Belongs to the peptidase S33 family. ABHD4/ABHD5 subfamily.

It is found in the cytoplasm. It catalyses the reaction a 1-acyl-sn-glycero-3-phosphate + an acyl-CoA = a 1,2-diacyl-sn-glycero-3-phosphate + CoA. In terms of biological role, lysophosphatidic acid acyltransferase which functions in phosphatidic acid biosynthesis. Is highly specific for lysophosphatidic acid and able to use different acyl-CoA donors. May regulate neutral lipid accumulation and participate in the regulation of lipid turnover in vegetative cells. Possesses additional triacylglycerol lipase and phospholipase A2 activities in vitro. Is not active as esterase or lysophospholipase. The chain is 1-acylglycerol-3-phosphate O-acyltransferase from Arabidopsis thaliana (Mouse-ear cress).